The chain runs to 268 residues: Type II methyltransferase M2.DpnII (268 aa).

This sequence belongs to the N(4)/N(6)-methyltransferase family. Homodimer.

The enzyme catalyses a 2'-deoxyadenosine in DNA + S-adenosyl-L-methionine = an N(6)-methyl-2'-deoxyadenosine in DNA + S-adenosyl-L-homocysteine + H(+). A beta subtype methylase that recognizes the single- or double-stranded sequence 5'-GATC-3', methylates A-2 on one or both strands (respectively), and protects the DNA from cleavage by the DpnII endonuclease. Further methylates DNA that is already methylated at 5'-GATC-3' sites. Essential for establishment of a previously unmethylated plasmid transformed into the cell as single-stranded DNA, enhances plasmid transfer to DpnII-containing strains of Streptococcus pneumoniae. The chain is Type II methyltransferase M2.DpnII from Streptococcus pneumoniae.